A 223-amino-acid chain; its full sequence is Voltage-dependent calcium channel gamma-1 subunit (223 aa).

Over 1-10 (MSQTKTAKVR) the chain is Cytoplasmic. A helical transmembrane segment spans residues 11 to 29 (VTLFFILAGGVLAMVAVVT). Residues 30–109 (DHWAVLSPHL…TQKEYSISAA (80 aa)) lie on the Extracellular side of the membrane. N-linked (GlcNAc...) asparagine glycosylation is found at N43 and N80. Residues C57 and C81 are joined by a disulfide bond. A helical membrane pass occupies residues 110–130 (AIAIFSLGFIIIGSICAFLSF). Over 131-135 (GNKRD) the chain is Cytoplasmic. Residues 136 to 156 (YLLRPASMFYAFAGLCLIVSV) traverse the membrane as a helical segment. The Extracellular portion of the chain corresponds to 157–180 (EVMRQSVKRMIDSEDTVWIEYYYS). Residues 181–205 (WSFACACAGFTLLFLGGLFLLLFSL) traverse the membrane as a helical segment. Residues 206-223 (PRMPQNPWESCMDTESEH) lie on the Cytoplasmic side of the membrane.

It belongs to the PMP-22/EMP/MP20 family. CACNG subfamily. Component of a calcium channel complex consisting of a pore-forming alpha subunit (CACNA1S) and the ancillary subunits CACNB1 or CACNB2, CACNG1 and CACNA2D1. The channel complex contains alpha, beta, gamma and delta subunits in a 1:1:1:1 ratio, i.e. it contains either CACNB1 or CACNB2. Post-translationally, N-glycosylated. As to expression, skeletal muscle.

Its subcellular location is the cell membrane. It localises to the sarcolemma. In terms of biological role, regulatory subunit of the voltage-gated calcium channel that gives rise to L-type calcium currents in skeletal muscle. Regulates channel inactivation kinetics. The sequence is that of Voltage-dependent calcium channel gamma-1 subunit (Cacng1) from Rattus norvegicus (Rat).